Here is a 438-residue protein sequence, read N- to C-terminus: Aspartic proteinase nepenthesin-2 (438 aa).

The signal sequence occupies residues 1-24 (MASPLYSVVLGLAIVSAIVAPTSS). The propeptide at 25 to 79 (TSRGTLLHHGQKRPQPGLRVDLEQVDSGKNLTKYELIKRAIKRGERRMRSINAML) is activation peptide. Asn54 carries an N-linked (GlcNAc...) asparagine glycan. In terms of domain architecture, Peptidase A1 spans 96–431 (YLMNVAIGTP…DLQNLAVSFV (336 aa)). Asp114 is an active-site residue. Disulfide bonds link Cys124/Cys127, Cys130/Cys204, Cys151/Cys169, Cys156/Cys164, Cys241/Cys435, and Cys354/Cys395. The active site involves Asp315.

Belongs to the peptidase A1 family.

Its subcellular location is the secreted. It catalyses the reaction Similar to pepsin, but also cleaves on either side of Asp and at Lys-|-Arg.. Its activity is regulated as follows. Inhibited by pepstatin and by diazoacetyl-D,L-norleucine methyl ester (DAN) in the presence of Cu(2+) ions. In terms of biological role, extracellular proteinase found in the pitcher fluid of carnivorous plants. Digest prey for nitrogen uptake. This is Aspartic proteinase nepenthesin-2 (nep2) from Nepenthes gracilis (Slender pitcher plant).